A 147-amino-acid chain; its full sequence is 3-dehydroquinate dehydratase (147 aa).

The active-site Proton acceptor is the Tyr-23. Substrate is bound by residues Asn-74, His-80, and Asp-87. The Proton donor role is filled by His-100. Residues 101–102 (IS) and Arg-111 each bind substrate.

The protein belongs to the type-II 3-dehydroquinase family. Homododecamer.

The catalysed reaction is 3-dehydroquinate = 3-dehydroshikimate + H2O. The protein operates within metabolic intermediate biosynthesis; chorismate biosynthesis; chorismate from D-erythrose 4-phosphate and phosphoenolpyruvate: step 3/7. Its function is as follows. Catalyzes a trans-dehydration via an enolate intermediate. The chain is 3-dehydroquinate dehydratase from Bacillus pumilus (strain SAFR-032).